The chain runs to 620 residues: MDSHTLIQALIYLGSAALIVPIAVRLGLGSVLGYLIAGCIIGPWGLRLVTDAESILHFAEIGVVLMLFIIGLELDPQRLWKLRAAVFGGGALQMVICGGLLGLFCMLLGLRWQVAELIGMTLALSSTAIAMQAMNERNLMVTQMGRSAFAVLLFQDIAAIPLVAMIPLLAASSASTTMGAFVLSALKVAGALVLVVLLGRYVTRPALRFVARSGLREVFSAVALFLVFGFGLLLEEVGLSMAMGAFLAGVLLASSEYRHALESDIEPFKGLLLGLFFIGVGMSIDFGTLLENPLRIVILLLGFLIIKIAMLWLIARPLQVPNKQRRWFAVLLGQGSEFAFVVFGAAQMANVLEPEWAKSLTLAVALSMAATPILLVILNRLEQSSTEEAREADEIDEEQPRVIIAGFGRFGQITGRLLLSSGVKMVVLDHDPDHIETLRKFGMKVFYGDATRMDLLESAGAAKAEVLINAIDDPQTNLQLTEMVKEHFPHLQIIARARDVDHYIRLRQAGVEKPERETFEGALKTGRLALESLGLGPYEARERADVFRRFNIQMVEEMAMVENDTKARAAVYKRTSAMLSEIITEDREHLSLIQRHGWQGTEEGKHTGNMADEPETKPSS.

The next 12 helical transmembrane spans lie at 4–24 (HTLI…PIAV), 26–46 (LGLG…PWGL), 54–74 (SILH…GLEL), 90–110 (GALQ…LLGL), 114–134 (VAEL…MQAM), 149–169 (FAVL…IPLL), 178–198 (MGAF…VVLL), 218–238 (VFSA…EEVG), 270–290 (GLLL…GTLL), 294–314 (LRIV…LWLI), 327–347 (WFAV…GAAQ), and 359–379 (SLTL…VILN). The region spanning 399–518 (QPRVIIAGFG…AGVEKPERET (120 aa)) is the RCK N-terminal domain. The tract at residues 597-620 (GWQGTEEGKHTGNMADEPETKPSS) is disordered.

This sequence belongs to the monovalent cation:proton antiporter 2 (CPA2) transporter (TC 2.A.37) family. KefC subfamily. As to quaternary structure, homodimer. Interacts with the regulatory subunit KefF.

Its subcellular location is the cell inner membrane. Functionally, pore-forming subunit of a potassium efflux system that confers protection against electrophiles. Catalyzes K(+)/H(+) antiport. The protein is Glutathione-regulated potassium-efflux system protein KefC of Escherichia coli O127:H6 (strain E2348/69 / EPEC).